Reading from the N-terminus, the 947-residue chain is Transcriptional regulator WAR1 (947 aa).

The span at 1–10 (MSDTTPEKGS) shows a compositional bias: basic and acidic residues. Residues 1–52 (MSDTTPEKGSVDSVSPSASNGSNTNNPLNNSSPQPLKSNESDKKPKVTRRSV) form a disordered region. Over residues 19–38 (SNGSNTNNPLNNSSPQPLKS) the composition is skewed to low complexity. Residues 54–86 (CKSCHSLKVKCTPSDPNNPSAPCVRCINANRIC) constitute a DNA-binding region (zn(2)-C6 fungal-type). Residues 96–222 (RRKKSEILEA…SPTSKDDEIN (127 aa)) are disordered. Residues 129–142 (NSSENYSSSINNAN) are compositionally biased toward low complexity. Polar residues-rich tracts occupy residues 143 to 158 (DSSL…TFDP) and 167 to 185 (QASS…QSAA).

As to quaternary structure, homodimer.

It is found in the nucleus. Transcription factor required for yeast cell adherence to silicone substrate. Plays a role in resistance to weak organic acids such as acetate and sorbate. Binds in vitro to a nitric oxide-responsive element (NORE) but seems not to be involved in response to nitrosative stress. The protein is Transcriptional regulator WAR1 (WAR1) of Candida albicans (strain SC5314 / ATCC MYA-2876) (Yeast).